The primary structure comprises 310 residues: Carbamate kinase 1 (310 aa).

It belongs to the carbamate kinase family.

Its subcellular location is the cytoplasm. The enzyme catalyses hydrogencarbonate + NH4(+) + ATP = carbamoyl phosphate + ADP + H2O + H(+). It functions in the pathway metabolic intermediate metabolism; carbamoyl phosphate degradation; CO(2) and NH(3) from carbamoyl phosphate: step 1/1. This Staphylococcus epidermidis (strain ATCC 12228 / FDA PCI 1200) protein is Carbamate kinase 1 (arcC1).